We begin with the raw amino-acid sequence, 186 residues long: UPF0397 protein lp_0150 (186 aa).

The next 5 helical transmembrane spans lie at 12–32, 45–65, 76–96, 112–132, and 151–171; these read VVAT…VAIP, GFLA…AVFI, GSPW…FGLA, LVWF…LLAP, and VITW…LLVL.

This sequence belongs to the UPF0397 family.

The protein localises to the cell membrane. The sequence is that of UPF0397 protein lp_0150 from Lactiplantibacillus plantarum (strain ATCC BAA-793 / NCIMB 8826 / WCFS1) (Lactobacillus plantarum).